Here is a 347-residue protein sequence, read N- to C-terminus: MIQVFIVDDSAVVRQVLTQILNKDPEIEIIGFASDPIFASEKLSSVWPDVFILDIEMPRMDGISFLKKIMSEKPTPVIICSSLAEKESETAVLAMKLGAVDIIEKPKVGLKNFLEESEILFIDSVRAASNARVKTHSFQNDDSKFLENHKQPKTDFSKIDTTDKLIAIGTSTGGTQALEFILTQLNIHCPGIVIVQHMPEKFTEAFANRLNQVCKIQVKEAKDGDRVQLGSAYIAPGNKHMEIYLSGAQFHIRVLDGPLVNRHRPSVDTLFHSVAKAAGKNAKGIIMTGMGNDGANGLLKMKQSGAHTIAQDEASCVVFGMPKEAILKGAVNTILPLSKIVGEVQYF.

Residues 3-120 (QVFIVDDSAV…KNFLEESEIL (118 aa)) enclose the Response regulatory domain. D54 carries the 4-aspartylphosphate modification. The region spanning 159–347 (IDTTDKLIAI…SKIVGEVQYF (189 aa)) is the CheB-type methylesterase domain. Residues S171, H197, and D293 contribute to the active site.

It belongs to the CheB family. Phosphorylated by CheA. Phosphorylation of the N-terminal regulatory domain activates the methylesterase activity.

The protein localises to the cytoplasm. It catalyses the reaction [protein]-L-glutamate 5-O-methyl ester + H2O = L-glutamyl-[protein] + methanol + H(+). The catalysed reaction is L-glutaminyl-[protein] + H2O = L-glutamyl-[protein] + NH4(+). Functionally, involved in chemotaxis. Part of a chemotaxis signal transduction system that modulates chemotaxis in response to various stimuli. Catalyzes the demethylation of specific methylglutamate residues introduced into the chemoreceptors (methyl-accepting chemotaxis proteins or MCP) by CheR. Also mediates the irreversible deamidation of specific glutamine residues to glutamic acid. The polypeptide is Protein-glutamate methylesterase/protein-glutamine glutaminase 3 (Leptospira interrogans serogroup Icterohaemorrhagiae serovar copenhageni (strain Fiocruz L1-130)).